We begin with the raw amino-acid sequence, 89 residues long: uncharacterized protein (89 aa).

The N-terminal stretch at 1–19 (MQLTKTQFVRCVFLLLANS) is a signal peptide.

This is an uncharacterized protein from Sulfolobus islandicus filamentous virus (isolate Iceland/Hveragerdi) (SIFV).